The sequence spans 150 residues: Small heat shock protein HspE (150 aa).

The sHSP domain occupies 27–137 (VDNGDTYPPY…KPRQIAIDVA (111 aa)).

It belongs to the small heat shock protein (HSP20) family.

The protein is Small heat shock protein HspE (hspE) of Bradyrhizobium diazoefficiens (strain JCM 10833 / BCRC 13528 / IAM 13628 / NBRC 14792 / USDA 110).